We begin with the raw amino-acid sequence, 2150 residues long: Genome polyprotein (2150 aa).

A lipid anchor (N-myristoyl glycine; by host) is attached at Gly-2. The Cytoplasmic portion of the chain corresponds to 2-1463 (GAQVSRQNVG…ELNLANTIIT (1462 aa)). An amphipathic alpha-helix region spans residues 565–581 (IAQNPVENYIDEVLNEV). The disordered stretch occupies residues 592 to 611 (PTTSNSAPALDAAETGHTSS). Active-site for protease 2A activity residues include His-868 and Asp-885. Cys-902 and Cys-904 together coordinate Zn(2+). Cys-956 acts as the For protease 2A activity in catalysis. Residues Cys-962 and His-964 each coordinate Zn(2+). Positions 1088 to 1157 (SDSWLKKFTE…SLRVADMKTQ (70 aa)) are membrane-binding. The oligomerization stretch occupies residues 1088-1221 (SDSWLKKFTE…PPGAGKSITT (134 aa)). Residues 1109–1113 (GNKIS) are RNA-binding. Residues 1181-1343 (EAKRIKTLYI…FKDPQGKLNV (163 aa)) form the SF3 helicase domain. Zn(2+) contacts are provided by Cys-1350, Cys-1361, and Cys-1366. The segment at 1350-1366 (CDVDNRIGNARCCPFVC) adopts a C4-type; degenerate zinc-finger fold. The tract at residues 1393–1400 (EDRRRRQV) is RNA-binding. Residues 1404–1409 (MTAIFQ) are oligomerization. An intramembrane segment occupies 1464-1479 (IIANVIGMARIIYVIY). The Cytoplasmic segment spans residues 1480–2150 (KLFCTLQGPY…LLLHEWYEKF (671 aa)). Tyr-1489 carries the post-translational modification O-(5'-phospho-RNA)-tyrosine. The Peptidase C3 domain occupies 1508–1686 (GPEEEFGMSL…FSAMLLRSYF (179 aa)). Residues His-1547, Glu-1578, and Cys-1654 each act as for protease 3C activity in the active site. The RdRp catalytic domain occupies 1918 to 2031 (KCIMAFDYTN…SYIHELDMEA (114 aa)). Asp-1924 and Asp-2017 together coordinate Mg(2+).

It belongs to the picornaviruses polyprotein family. Interacts with capsid protein VP1 and capsid protein VP3 to form heterotrimeric protomers. As to quaternary structure, interacts with capsid protein VP0, and capsid protein VP3 to form heterotrimeric protomers. Five protomers subsequently associate to form pentamers which serve as building blocks for the capsid. Interacts with capsid protein VP2, capsid protein VP3 and capsid protein VP4 following cleavage of capsid protein VP0. In terms of assembly, interacts with capsid protein VP1 and capsid protein VP3 in the mature capsid. Interacts with capsid protein VP0 and capsid protein VP1 to form heterotrimeric protomers. Five protomers subsequently associate to form pentamers which serve as building blocks for the capsid. Interacts with capsid protein VP4 in the mature capsid. Interacts with protein 2C; this interaction may be important for virion morphogenesis. As to quaternary structure, interacts with capsid protein VP1 and capsid protein VP3. In terms of assembly, homodimer. Homohexamer; forms a hexameric ring structure with 6-fold symmetry characteristic of AAA+ ATPases. Interacts (via N-terminus) with host RTN3 (via reticulon domain); this interaction is important for viral replication. Interacts with capsid protein VP3; this interaction may be important for virion morphogenesis. As to quaternary structure, interacts with protein 3CD. In terms of assembly, homodimer. Interacts with host GBF1. Interacts (via GOLD domain) with host ACBD3 (via GOLD domain); this interaction allows the formation of a viral protein 3A/ACBD3 heterotetramer with a 2:2 stoichiometry, which will stimulate the recruitment of host PI4KB in order to synthesize PI4P at the viral RNA replication sites. Interacts with RNA-directed RNA polymerase. As to quaternary structure, interacts with protein 3AB and with RNA-directed RNA polymerase. In terms of assembly, interacts with Viral protein genome-linked and with protein 3CD. The cofactor is Mg(2+). Specific enzymatic cleavages in vivo by the viral proteases yield processing intermediates and the mature proteins. Post-translationally, myristoylation is required for the formation of pentamers during virus assembly. Further assembly of 12 pentamers and a molecule of genomic RNA generates the provirion. In terms of processing, during virion maturation, immature virions are rendered infectious following cleavage of VP0 into VP4 and VP2. This maturation seems to be an autocatalytic event triggered by the presence of RNA in the capsid and it is followed by a conformational change infectious virion. Myristoylation is required during RNA encapsidation and formation of the mature virus particle. Post-translationally, VPg is uridylylated by the polymerase into VPg-pUpU. This acts as a nucleotide-peptide primer for the genomic RNA replication.

The protein localises to the virion. Its subcellular location is the host cytoplasm. The protein resides in the host cytoplasmic vesicle membrane. It localises to the host nucleus. The catalysed reaction is a ribonucleoside 5'-triphosphate + H2O = a ribonucleoside 5'-diphosphate + phosphate + H(+). It carries out the reaction Selective cleavage of Tyr-|-Gly bond in the picornavirus polyprotein.. It catalyses the reaction RNA(n) + a ribonucleoside 5'-triphosphate = RNA(n+1) + diphosphate. The enzyme catalyses Selective cleavage of Gln-|-Gly bond in the poliovirus polyprotein. In other picornavirus reactions Glu may be substituted for Gln, and Ser or Thr for Gly.. With respect to regulation, replication or transcription is subject to high level of random mutations by the nucleotide analog ribavirin. Its function is as follows. Forms an icosahedral capsid of pseudo T=3 symmetry with capsid proteins VP2 and VP3. The capsid is 300 Angstroms in diameter, composed of 60 copies of each capsid protein and enclosing the viral positive strand RNA genome. Capsid protein VP1 mainly forms the vertices of the capsid. Capsid protein VP1 interacts with host cell receptor to provide virion attachment to target host cells. This attachment induces virion internalization. Tyrosine kinases are probably involved in the entry process. After binding to its receptor, the capsid undergoes conformational changes. Capsid protein VP1 N-terminus (that contains an amphipathic alpha-helix) and capsid protein VP4 are externalized. Together, they shape a pore in the host membrane through which viral genome is translocated to host cell cytoplasm. Functionally, forms an icosahedral capsid of pseudo T=3 symmetry with capsid proteins VP2 and VP3. The capsid is 300 Angstroms in diameter, composed of 60 copies of each capsid protein and enclosing the viral positive strand RNA genome. In terms of biological role, lies on the inner surface of the capsid shell. After binding to the host receptor, the capsid undergoes conformational changes. Capsid protein VP4 is released, Capsid protein VP1 N-terminus is externalized, and together, they shape a pore in the host membrane through which the viral genome is translocated into the host cell cytoplasm. Component of immature procapsids, which is cleaved into capsid proteins VP4 and VP2 after maturation. Allows the capsid to remain inactive before the maturation step. Its function is as follows. Cysteine protease that cleaves viral polyprotein and specific host proteins. It is responsible for the autocatalytic cleavage between the P1 and P2 regions, which is the first cleavage occurring in the polyprotein. Also cleaves the host translation initiation factor EIF4G1, in order to shut down the capped cellular mRNA translation. Inhibits the host nucleus-cytoplasm protein and RNA trafficking by cleaving host members of the nuclear pores. Counteracts stress granule formation probably by antagonizing its assembly or promoting its dissassembly. Functionally, plays an essential role in the virus replication cycle by acting as a viroporin. Creates a pore in the host endoplasmic reticulum and as a consequence releases Ca2+ in the cytoplasm of infected cell. In turn, high levels of cytoplasmic calcium may trigger membrane trafficking and transport of viral ER-associated proteins to viroplasms, sites of viral genome replication. In terms of biological role, induces and associates with structural rearrangements of intracellular membranes. Displays RNA-binding, nucleotide binding and NTPase activities. May play a role in virion morphogenesis and viral RNA encapsidation by interacting with the capsid protein VP3. Localizes the viral replication complex to the surface of membranous vesicles. Together with protein 3CD binds the Cis-Active RNA Element (CRE) which is involved in RNA synthesis initiation. Acts as a cofactor to stimulate the activity of 3D polymerase, maybe through a nucleid acid chaperone activity. Its function is as follows. Localizes the viral replication complex to the surface of membranous vesicles. It inhibits host cell endoplasmic reticulum-to-Golgi apparatus transport and causes the disassembly of the Golgi complex, possibly through GBF1 interaction. This would result in depletion of MHC, trail receptors and IFN receptors at the host cell surface. Plays an essential role in viral RNA replication by recruiting ACBD3 and PI4KB at the viral replication sites, thereby allowing the formation of the rearranged membranous structures where viral replication takes place. Functionally, acts as a primer for viral RNA replication and remains covalently bound to viral genomic RNA. VPg is uridylylated prior to priming replication into VPg-pUpU. The oriI viral genomic sequence may act as a template for this. The VPg-pUpU is then used as primer on the genomic RNA poly(A) by the RNA-dependent RNA polymerase to replicate the viral genome. During genome replication, the VPg-RNA linkage is removed by the host TDP2, thereby accelerating replication. During the late stage of the replication cycle, host TDP2 is excluded from sites of viral RNA synthesis and encapsidation, allowing for the generation of progeny virions. In terms of biological role, involved in the viral replication complex and viral polypeptide maturation. It exhibits protease activity with a specificity and catalytic efficiency that is different from protease 3C. Protein 3CD lacks polymerase activity. Protein 3CD binds to the 5'UTR of the viral genome. Replicates the viral genomic RNA on the surface of intracellular membranes. May form linear arrays of subunits that propagate along a strong head-to-tail interaction called interface-I. Covalently attaches UMP to a tyrosine of VPg, which is used to prime RNA synthesis. The positive stranded RNA genome is first replicated at virus induced membranous vesicles, creating a dsRNA genomic replication form. This dsRNA is then used as template to synthesize positive stranded RNA genomes. ss(+)RNA genomes are either translated, replicated or encapsidated. Its function is as follows. Major viral protease that mediates proteolytic processing of the polyprotein. Cleaves host EIF5B, contributing to host translation shutoff. Also cleaves host PABPC1, contributing to host translation shutoff. Cleaves host NLRP1, triggers host N-glycine-mediated degradation of the autoinhibitory NLRP1 N-terminal fragment. The polypeptide is Genome polyprotein (Homo sapiens (Human)).